The chain runs to 473 residues: Siroheme synthase (473 aa).

Positions 1 to 222 (MNTQPHHSSP…GDESRADARL (222 aa)) are precorrin-2 dehydrogenase /sirohydrochlorin ferrochelatase. NAD(+)-binding positions include 37–38 (EI) and 58–59 (EK). Positions 233 to 473 (GEVWLVGAGP…QVVRHRVVSP (241 aa)) are uroporphyrinogen-III C-methyltransferase. Proline 242 is a binding site for S-adenosyl-L-methionine. Catalysis depends on aspartate 265, which acts as the Proton acceptor. Lysine 287 serves as the catalytic Proton donor. S-adenosyl-L-methionine-binding positions include 318–320 (GGD), isoleucine 323, 348–349 (SA), methionine 401, and glycine 430.

This sequence in the N-terminal section; belongs to the precorrin-2 dehydrogenase / sirohydrochlorin ferrochelatase family. In the C-terminal section; belongs to the precorrin methyltransferase family.

It catalyses the reaction uroporphyrinogen III + 2 S-adenosyl-L-methionine = precorrin-2 + 2 S-adenosyl-L-homocysteine + H(+). It carries out the reaction precorrin-2 + NAD(+) = sirohydrochlorin + NADH + 2 H(+). The catalysed reaction is siroheme + 2 H(+) = sirohydrochlorin + Fe(2+). It participates in cofactor biosynthesis; adenosylcobalamin biosynthesis; precorrin-2 from uroporphyrinogen III: step 1/1. Its pathway is cofactor biosynthesis; adenosylcobalamin biosynthesis; sirohydrochlorin from precorrin-2: step 1/1. The protein operates within porphyrin-containing compound metabolism; siroheme biosynthesis; precorrin-2 from uroporphyrinogen III: step 1/1. It functions in the pathway porphyrin-containing compound metabolism; siroheme biosynthesis; siroheme from sirohydrochlorin: step 1/1. It participates in porphyrin-containing compound metabolism; siroheme biosynthesis; sirohydrochlorin from precorrin-2: step 1/1. Functionally, multifunctional enzyme that catalyzes the SAM-dependent methylations of uroporphyrinogen III at position C-2 and C-7 to form precorrin-2 via precorrin-1. Then it catalyzes the NAD-dependent ring dehydrogenation of precorrin-2 to yield sirohydrochlorin. Finally, it catalyzes the ferrochelation of sirohydrochlorin to yield siroheme. This is Siroheme synthase from Gluconobacter oxydans (strain 621H) (Gluconobacter suboxydans).